Reading from the N-terminus, the 818-residue chain is MSEGAYQRLWESSHATLQELLDQEQLLLEPAPDRERQSFQYRLASLYLHYLGLLRRFDTVYDQMVQPQKRRLLRRLLDGVAGRVLELKDELVRADLCENHCLDRVLQDFKLTPADLEVPIPKYFLLEQSTTVRERGLILAEILSRLEPVSSQKSFTGMHRTEAIILVQKAERARQGRLRATFMREIRRDEEQDGRIREDGWHKFSQGQAAVTIQKVWKGYLQRKRTQQDRRMEMEFIGMLPSPNQVEHLSIISQPCLVEDVQRLRQMEKEEEFRAAMVKAHDSLVETEGPDMKEKMKEQIRQWFIECHDLTGRFPDYPDASSGGSYSIFADKTPEQVRMELEMQMQENRKKEQEKSKEKGKDEKEKKKGKEEKAKKGEVDAVLQVLPSKCIPMICAGHEEYLNTWKNRCESIHPSQNYDSETLREEKRKEVELEIRIQVDELMRQELRKLRLAVDKEEERPLRAPKKTPGKKTGKKKEKDLTSDRSVESLYEELVISGLLRKSESVALKDYIGDFLYLGSTLSLVKKLPMPSLFDIRQNVALYAVLRLGSPDIHIMAPLIRSILLVGPSGMGKKMLVKAVCTETGANLFDLSPENLLGKYPGRNGAQMMVHIVFKVARLLQPSVIWIGNAEKNFYKKTPKEDKEMDPKRIKKDLTKALRLLTPGDRVMLIGTTSRPQLAEMRGLCRVYERILFMPRPDYASRYVLWKRMIEARGIQPTQHLDISALAKVSDGYTPGHILQAIQSVLSERRFLQLSKRPLVASEFLGQLVKLDPVYREEEESLKDWYFKTPLGKKSMKHRMDQLEAEEAKLDKEKKKRK.

One can recognise an IQ domain in the interval 206–235 (QGQAAVTIQKVWKGYLQRKRTQQDRRMEME). 2 disordered regions span residues 344–377 (QMQENRKKEQEKSKEKGKDEKEKKKGKEEKAKKG) and 458–482 (EERPLRAPKKTPGKKTGKKKEKDLT). The segment covering 463–476 (RAPKKTPGKKTGKK) has biased composition (basic residues). 567-574 (GPSGMGKK) is an ATP binding site. Residues 795–818 (SMKHRMDQLEAEEAKLDKEKKKRK) form a disordered region. Over residues 798 to 818 (HRMDQLEAEEAKLDKEKKKRK) the composition is skewed to basic and acidic residues.

It belongs to the AAA ATPase family.

This Homo sapiens (Human) protein is IQ and AAA domain-containing protein 1-like (IQCA1L).